The primary structure comprises 345 residues: uncharacterized protein (345 aa).

The next 8 membrane-spanning stretches (helical) occupy residues 9–31 (VVAFSIVLSALLCSISLLQAAFV), 84–103 (TLVAILGTGLSAPLLLTYLL), 116–138 (YFSLFLCALNFEGVRLFLPILYT), 148–170 (VPMQIVMFFRSLALLALFASGIF), 182–204 (VVFVLCTVAFLISRYTTIHTIHA), 269–286 (WFFWTTAVLSALSYGVLG), 291–308 (ISHYYIAAAALPFVIAGY), and 313–335 (HGLTWSACIVGLFLLNTASVFFI).

Its subcellular location is the cell membrane. This is an uncharacterized protein from Treponema pallidum (strain Nichols).